Consider the following 192-residue polypeptide: MLKKTLAALAIGTALLSAGQVMAADYKIDKEGQHAFIDWKISHLGYSYIHGTFKDWDGTFSWDAAKPETSKIAVDVKTASLWSNHAERDKHIASKDFLDVAKFADAKFVSTAVKSTGEKTADVTGDLTFHGVTKPVTFKATFNGEGKDPWGGERAGFNAKTTVNLNDFGIKGPGPSSQTVDLDISLEGVKQK.

A signal peptide spans 1–23 (MLKKTLAALAIGTALLSAGQVMA).

Belongs to the UPF0312 family. Type 1 subfamily.

Its subcellular location is the periplasm. The polypeptide is UPF0312 protein PFLU_5725 (Pseudomonas fluorescens (strain SBW25)).